The primary structure comprises 118 residues: Putative pterin-4-alpha-carbinolamine dehydratase (118 aa).

This sequence belongs to the pterin-4-alpha-carbinolamine dehydratase family.

It catalyses the reaction (4aS,6R)-4a-hydroxy-L-erythro-5,6,7,8-tetrahydrobiopterin = (6R)-L-erythro-6,7-dihydrobiopterin + H2O. The protein is Putative pterin-4-alpha-carbinolamine dehydratase of Pseudomonas putida (strain GB-1).